A 261-amino-acid polypeptide reads, in one-letter code: MAVGKNKRISKGKKGGKKKAADPFAKKDWYDIKAPSVFEVRNVGKTLVSRTQGTKIASEGLKHRVFEISLADLQADEDQAYRKIRLRAEDVQGRNVLTNFWGMDFTTDKLRSLVRKWQTLIEAHVDVKTTDNYTLRLFCIAFTKKRVNQNKKTCYAQSSQIRQIRRKMREIMTNMATSCDLKELVKKFIPESIGREIEKATSSIYPLQNVYIRKVKILKAPKFDLGKLMEVHGDYSEDVGTKLERPADEPVAEGVTEVIGA.

Basic residues predominate over residues methionine 1 to lysine 18. A disordered region spans residues methionine 1–alanine 20.

It belongs to the eukaryotic ribosomal protein eS1 family. Component of the small ribosomal subunit. Mature ribosomes consist of a small (40S) and a large (60S) subunit. The 40S subunit contains about 33 different proteins and 1 molecule of RNA (18S). The 60S subunit contains about 49 different proteins and 3 molecules of RNA (25S, 5.8S and 5S).

It localises to the cytoplasm. This Vitis vinifera (Grape) protein is Small ribosomal subunit protein eS1z.